Reading from the N-terminus, the 2259-residue chain is Putative Polycomb group protein ASXL3 (2259 aa).

One can recognise an HTH HARE-type domain in the interval 10–83; the sequence is RTWAEAARLA…KSGLYALRKE (74 aa). The disordered stretch occupies residues 181 to 230; sequence VVLTPLKVSDEQSDSPSGSESKNGEADSSDKEMKHGQKSPTGKQTSQHLK. The span at 202 to 215 shows a compositional bias: basic and acidic residues; it reads KNGEADSSDKEMKH. Residues 218-227 are compositionally biased toward polar residues; the sequence is KSPTGKQTSQ. In terms of domain architecture, DEUBAD spans 253 to 362; it reads PGSILVNTNL…FERFYGERSG (110 aa). Disordered stretches follow at residues 364–399, 607–643, 703–810, 857–1012, 1025–1049, 1126–1150, 1433–1462, 1614–1643, 1687–1719, and 1993–2075; these read SREESIKLTSGPNHEGAEGSSSHGDSGIPGPSAQNA, CISETSFSSESPEGACASLPSPGGETQSTSEESCTPA, EASP…IPEP, SEMT…PLKI, SQPVSKAESRASTSTSVSSGRNTGA, RLPSVSTKEDSLNMEASPTPETKME, LSGENLDNNSGPLNRTDNSEKPQQPAGGFV, DPMRNTAPPVVSHSSSSKQKEHPEQTGLKA, DFPGPERPPPVTEVTSSASVQPTQTMKPSTTSP, and NMLS…TTKR. Polar residues-rich tracts occupy residues 607–617, 630–643, and 703–717; these read CISETSFSSES, GETQSTSEESCTPA, and EASPVSNLPLTSEAS. Low complexity predominate over residues 722–741; that stretch reads LPPTSETSSESSMPLTSETP. Composition is skewed to polar residues over residues 770–781 and 926–945; these read KSPSGSEEANSP and QSSTLNRLETSHTSKVSEPS. Basic and acidic residues-rich tracts occupy residues 949-985 and 995-1006; these read DGIRNDNRESEISKRKTVEHSFGICKEKRARIEDDQS and PEKEQPPREEPR. Low complexity predominate over residues 1034–1043; the sequence is RASTSTSVSS. Polar residues predominate over residues 1437-1448; sequence NLDNNSGPLNRT. Polar residues predominate over residues 1699 to 1719; sequence EVTSSASVQPTQTMKPSTTSP. Pro residues predominate over residues 2023–2055; sequence PLPPPPPPPPPPPPPLALPPPPPPPPPLPPPLP. Residues 2221-2258 form a PHD-type; atypical zinc finger; that stretch reads ELKCSCRLKAMIVCKGCGAFCHDDCIGPSKLCVACLVV.

It belongs to the Asx family. In terms of assembly, core component of the polycomb repressive deubiquitinase (PR-DUB) complex, at least composed of BAP1, one of ASXL1, ASXL2 or (probably) ASXL3, and one of MBD5 or MBD6. Distinct combinations of ASXL and MBD proteins may preferentially bind specific histone modification marks. The PR-DUB core associates with a number of accessory proteins, including FOXK1, FOXK2, KDM1B, HCFC1 and OGT; KDM1B specifically associates with ASXL2 PR-DUB complexes. Interacts (via PHD domain) with MBD5 and MBD6 (via MBD domain); the interaction is probably direct and mediates association of MBD proteins with the PR-DUB core.

The protein resides in the nucleus. Its function is as follows. Putative Polycomb group (PcG) protein. PcG proteins act by forming multiprotein complexes, which are required to maintain the transcriptionally repressive state of homeotic genes throughout development. PcG proteins are not required to initiate repression, but to maintain it during later stages of development. They probably act via methylation of histones, rendering chromatin heritably changed in its expressibility. Non-catalytic component of the PR-DUB complex, a complex that specifically mediates deubiquitination of histone H2A monoubiquitinated at 'Lys-119' (H2AK119ub1). The PR-DUB complex is an epigenetic regulator of gene expression and acts as a transcriptional coactivator, affecting genes involved in development, cell communication, signaling, cell proliferation and cell viability. ASXL1, ASXL2 and ASXL3 function redundantly in the PR-DUB complex and are essential for chromatin recruitment and transcriptional activation of associated genes. This Mus musculus (Mouse) protein is Putative Polycomb group protein ASXL3 (Asxl3).